The sequence spans 501 residues: ATP synthase subunit alpha (501 aa).

169-176 (GDRQTGKT) provides a ligand contact to ATP.

The protein belongs to the ATPase alpha/beta chains family. In terms of assembly, F-type ATPases have 2 components, CF(1) - the catalytic core - and CF(0) - the membrane proton channel. CF(1) has five subunits: alpha(3), beta(3), gamma(1), delta(1), epsilon(1). CF(0) has three main subunits: a(1), b(2) and c(9-12). The alpha and beta chains form an alternating ring which encloses part of the gamma chain. CF(1) is attached to CF(0) by a central stalk formed by the gamma and epsilon chains, while a peripheral stalk is formed by the delta and b chains.

The protein localises to the cell membrane. It catalyses the reaction ATP + H2O + 4 H(+)(in) = ADP + phosphate + 5 H(+)(out). In terms of biological role, produces ATP from ADP in the presence of a proton gradient across the membrane. The alpha chain is a regulatory subunit. The polypeptide is ATP synthase subunit alpha (Streptococcus mutans serotype c (strain ATCC 700610 / UA159)).